A 176-amino-acid polypeptide reads, in one-letter code: Lipoprotein signal peptidase (176 aa).

4 helical membrane passes run 26–46, 60–80, 82–102, and 107–127; these read LWMA…IVIV, FFNL…ADAG, WQRW…VWLL, and GQKL…GNVV. Catalysis depends on residues Asp137 and Asp155. Residues 147 to 167 form a helical membrane-spanning segment; sequence HWPAFNVADCAITVGAVLLIV.

The protein belongs to the peptidase A8 family.

It is found in the cell inner membrane. The enzyme catalyses Release of signal peptides from bacterial membrane prolipoproteins. Hydrolyzes -Xaa-Yaa-Zaa-|-(S,diacylglyceryl)Cys-, in which Xaa is hydrophobic (preferably Leu), and Yaa (Ala or Ser) and Zaa (Gly or Ala) have small, neutral side chains.. The protein operates within protein modification; lipoprotein biosynthesis (signal peptide cleavage). Functionally, this protein specifically catalyzes the removal of signal peptides from prolipoproteins. This is Lipoprotein signal peptidase from Cupriavidus pinatubonensis (strain JMP 134 / LMG 1197) (Cupriavidus necator (strain JMP 134)).